The primary structure comprises 453 residues: DNA repair protein RadA (453 aa).

The C4-type zinc finger occupies 10 to 27 (CQECGYQSPKYLGRCPNC). 95–102 (GDPGIGKS) contributes to the ATP binding site. A RadA KNRFG motif motif is present at residues 251 to 255 (KNRFG). The interval 350–453 (DAYLKSAGGV…VGQVLKAVFS (104 aa)) is lon-protease-like.

It belongs to the RecA family. RadA subfamily.

DNA-dependent ATPase involved in processing of recombination intermediates, plays a role in repairing DNA breaks. Stimulates the branch migration of RecA-mediated strand transfer reactions, allowing the 3' invading strand to extend heteroduplex DNA faster. Binds ssDNA in the presence of ADP but not other nucleotides, has ATPase activity that is stimulated by ssDNA and various branched DNA structures, but inhibited by SSB. Does not have RecA's homology-searching function. This chain is DNA repair protein RadA, found in Streptococcus pyogenes serotype M6 (strain ATCC BAA-946 / MGAS10394).